The sequence spans 319 residues: Olfactory receptor 8K1 (319 aa).

Residues 1–31 (MNHVVKHNHTAVTKVTEFILMGITDNPGLQA) lie on the Extracellular side of the membrane. N8 carries N-linked (GlcNAc...) asparagine glycosylation. Residues 32–52 (PLFGLFLIIYLVTVIGNLGMV) form a helical membrane-spanning segment. Residues 53 to 60 (ILTYLDSK) are Cytoplasmic-facing. The helical transmembrane segment at 61–81 (LHTPMYFFLRHLSITDLGYST) threads the bilayer. At 82–105 (VIAPKMLVNFIVHKNTISYNWYAT) the chain is on the extracellular side. Residues 106-126 (QLAFFEIFIISELFILSAMAY) form a helical membrane-spanning segment. Over 127-145 (DRYVAICKPLLYVIIMAEK) the chain is Cytoplasmic. Residues 146 to 166 (VLWVLVIVPYLYSTFVSLFLT) traverse the membrane as a helical segment. Residues 167-203 (IKLFKLSFCGSNIISYFYCDCIPLMSILCSDTNELEL) lie on the Extracellular side of the membrane. A helical membrane pass occupies residues 204 to 223 (IILIFSGCNLLFSLSIVLIS). At 224-243 (YMFILVAILRMNSRKGRYKA) the chain is on the cytoplasmic side. Residues 244–264 (FSTCSSHLTVVIMFYGTLLFI) form a helical membrane-spanning segment. Over 265 to 277 (YLQPKSSHTLAID) the chain is Extracellular. A helical membrane pass occupies residues 278–298 (KMASVFYTLLIPMLNPLIYSL). Topologically, residues 299–319 (RNKEVKDALKRTLTNRFKIPI) are cytoplasmic.

It belongs to the G-protein coupled receptor 1 family.

The protein resides in the cell membrane. In terms of biological role, odorant receptor. The chain is Olfactory receptor 8K1 (OR8K1) from Homo sapiens (Human).